A 198-amino-acid polypeptide reads, in one-letter code: Syndecan-4 (198 aa).

Positions 1–18 (MAPARLFALLLLFVGGVA) are cleaved as a signal peptide. At 19–145 (ESIRETEVID…QGSNIFERTE (127 aa)) the chain is on the extracellular side. O-linked (Xyl...) (glycosaminoglycan) serine glycosylation is found at Ser-39, Ser-61, and Ser-63. Residue Ser-95 is glycosylated (O-linked (Xyl...) (chondroitin sulfate) serine). Residues 146–170 (VLAALIVGGIVGILFAVFLILLLMY) traverse the membrane as a helical segment. Residues 171 to 198 (RMKKKDEGSYDLGKKPIYKKAPTNEFYA) are Cytoplasmic-facing.

The protein belongs to the syndecan proteoglycan family. In terms of assembly, homodimer. Interacts with CDCP1 and SDCBP. Interacts (via its cytoplasmic domain) with GIPC (via its PDZ domain). Interacts (via its cytoplasmic domain) with NUDT16L1. Interacts with DNM2; this interaction is markedly enhanced at focal ahesion site upon induction of focal adhesions and stress-fiber formation. Shedding is enhanced by a number of factors such as heparanase, thrombin or EGF. Also by stress and wound healing. PMA-mediated shedding is inhibited by TIMP3. Post-translationally, O-glycosylated; contains both chondroitin sulfate and heparan sulfate. Ser-39, Ser-61 and Ser-63 can all be modified by either chondroitin sulfate or heparan sulfate, and the protein exists in forms that contain only chondroitin sulfate, only heparan sulfate and both chondroitin sulfate and heparan sulfate.

The protein localises to the membrane. It is found in the secreted. Functionally, cell surface proteoglycan which regulates exosome biogenesis in concert with SDCBP and PDCD6IP. This is Syndecan-4 from Pongo abelii (Sumatran orangutan).